Reading from the N-terminus, the 493-residue chain is Cobyric acid synthase (493 aa).

The GATase cobBQ-type domain maps to 255–441; it reads ELEIAVLRLP…LHGLLENGRW (187 aa). C336 functions as the Nucleophile in the catalytic mechanism. H433 is a catalytic residue.

It belongs to the CobB/CobQ family. CobQ subfamily.

It participates in cofactor biosynthesis; adenosylcobalamin biosynthesis. Catalyzes amidations at positions B, D, E, and G on adenosylcobyrinic A,C-diamide. NH(2) groups are provided by glutamine, and one molecule of ATP is hydrogenolyzed for each amidation. The sequence is that of Cobyric acid synthase from Synechococcus sp. (strain RCC307).